Reading from the N-terminus, the 418-residue chain is Probable serine/threonine-protein kinase DDB_G0280461 (418 aa).

Positions 14-271 constitute a Protein kinase domain; sequence KIEENEFSKG…IVQTLDQLAI (258 aa). ATP contacts are provided by residues 20–28 and K41; that span reads FSKGSFAKV. D139 (proton acceptor) is an active-site residue. Disordered stretches follow at residues 327–356 and 377–418; these read NNNN…NNNN and SVNS…CLIN. A compositionally biased stretch (low complexity) spans 377–402; that stretch reads SVNSSFSNSSLGSNGSNSSGTSTSSG. Residues 403–418 show a composition bias toward basic residues; sequence GKKRSQKRKSWKCLIN.

It belongs to the protein kinase superfamily. TKL Ser/Thr protein kinase family.

It carries out the reaction L-seryl-[protein] + ATP = O-phospho-L-seryl-[protein] + ADP + H(+). The enzyme catalyses L-threonyl-[protein] + ATP = O-phospho-L-threonyl-[protein] + ADP + H(+). In Dictyostelium discoideum (Social amoeba), this protein is Probable serine/threonine-protein kinase DDB_G0280461.